The sequence spans 420 residues: Structure-specific endonuclease subunit SLX1 homolog (420 aa).

The 88-residue stretch at serine 19 to arginine 106 folds into the GIY-YIG domain. 2 disordered regions span residues serine 237 to asparagine 306 and aspartate 311 to alanine 330. Residues proline 247 to alanine 266 are compositionally biased toward low complexity. The segment covering valine 279–glutamate 301 has biased composition (basic and acidic residues). A compositionally biased stretch (acidic residues) spans aspartate 311–aspartate 327. An SLX1-type zinc finger spans residues cysteine 348–cysteine 405.

It belongs to the SLX1 family. In terms of assembly, forms a heterodimer with a member of the SLX4 family. A divalent metal cation is required as a cofactor.

Its subcellular location is the nucleus. Catalytic subunit of a heterodimeric structure-specific endonuclease that resolves DNA secondary structures generated during DNA repair and recombination. Has endonuclease activity towards branched DNA substrates, introducing single-strand cuts in duplex DNA close to junctions with ss-DNA. The polypeptide is Structure-specific endonuclease subunit SLX1 homolog (Monosiga brevicollis (Choanoflagellate)).